Reading from the N-terminus, the 238-residue chain is Probable transcriptional regulatory protein VS_II1504 (238 aa).

This sequence belongs to the TACO1 family.

The protein resides in the cytoplasm. In Vibrio atlanticus (strain LGP32) (Vibrio splendidus (strain Mel32)), this protein is Probable transcriptional regulatory protein VS_II1504.